Reading from the N-terminus, the 733-residue chain is 1,4-alpha-glucan branching enzyme GlgB (733 aa).

Catalysis depends on Asp-409, which acts as the Nucleophile. The active-site Proton donor is Glu-462.

It belongs to the glycosyl hydrolase 13 family. GlgB subfamily. Monomer.

The enzyme catalyses Transfers a segment of a (1-&gt;4)-alpha-D-glucan chain to a primary hydroxy group in a similar glucan chain.. Its pathway is glycan biosynthesis; glycogen biosynthesis. Catalyzes the formation of the alpha-1,6-glucosidic linkages in glycogen by scission of a 1,4-alpha-linked oligosaccharide from growing alpha-1,4-glucan chains and the subsequent attachment of the oligosaccharide to the alpha-1,6 position. The polypeptide is 1,4-alpha-glucan branching enzyme GlgB (Gloeobacter violaceus (strain ATCC 29082 / PCC 7421)).